We begin with the raw amino-acid sequence, 917 residues long: Probable dipeptidyl-aminopeptidase B (917 aa).

Positions 1-78 are disordered; the sequence is MGVEKRINDE…EGDLEEGFVP (78 aa). Residues 1–90 lie on the Cytoplasmic side of the membrane; the sequence is MGVEKRINDE…GGWSAPRKVS (90 aa). Residues 16–26 show a composition bias toward basic and acidic residues; that stretch reads AERDDKSRDSI. Positions 27 to 49 are enriched in low complexity; that stretch reads DSTSTASISLALLGGANGSAHGS. The segment covering 55 to 65 has biased composition (basic and acidic residues); it reads RKSENQEKYHD. A helical; Signal-anchor for type II membrane protein membrane pass occupies residues 91–111; sequence VIFTLIVTLCIAGWLVAFFVL. Over 112–917 the chain is Vacuolar; that stretch reads LGRHKDSSKD…LGLINILRNG (806 aa). Asn350 and Asn465 each carry an N-linked (GlcNAc...) asparagine glycan. Ser754 serves as the catalytic Charge relay system. N-linked (GlcNAc...) asparagine glycosylation occurs at Asn813. Catalysis depends on charge relay system residues Asp831 and His864.

It belongs to the peptidase S9B family.

The protein localises to the vacuole membrane. It carries out the reaction Release of an N-terminal dipeptide, Xaa-Yaa-|-Zaa-, from a polypeptide, preferentially when Yaa is Pro, provided Zaa is neither Pro nor hydroxyproline.. Its function is as follows. Type IV dipeptidyl-peptidase which removes N-terminal dipeptides sequentially from polypeptides having unsubstituted N-termini provided that the penultimate residue is proline. The chain is Probable dipeptidyl-aminopeptidase B (DAPB) from Coccidioides posadasii (strain C735) (Valley fever fungus).